A 31-amino-acid polypeptide reads, in one-letter code: Malate dehydrogenase, mitochondrial (31 aa).

Residues 9–19 (GIGQPLSLLMK) and 20–31 (DDLFNINAGIVK) each bind NAD(+).

The protein belongs to the LDH/MDH superfamily. MDH type 1 family. Homodimer.

The protein resides in the mitochondrion matrix. The enzyme catalyses (S)-malate + NAD(+) = oxaloacetate + NADH + H(+). This is Malate dehydrogenase, mitochondrial from Imperata cylindrica (Cogon grass).